The primary structure comprises 194 residues: MSLIPMVVEQTGRGERAYDIFSRLLKDRIIFLGGAVDDQVANLIIAQMLFLESEDPEKEIFLYINSPGGVVTAGMAIYDTMQYVRCPVSTLCVGQAASMGAVLLAAGGEGKRFALPHARIMIHQPWGGFQGQATDINIHAQEILRLRETLNGVLASHTGQTLEKIATDTERDFFMGSEEAKKYGIVDDIVKRKV.

Residue Ser98 is the Nucleophile of the active site. The active site involves His123.

This sequence belongs to the peptidase S14 family. As to quaternary structure, fourteen ClpP subunits assemble into 2 heptameric rings which stack back to back to give a disk-like structure with a central cavity, resembling the structure of eukaryotic proteasomes.

The protein resides in the cytoplasm. It catalyses the reaction Hydrolysis of proteins to small peptides in the presence of ATP and magnesium. alpha-casein is the usual test substrate. In the absence of ATP, only oligopeptides shorter than five residues are hydrolyzed (such as succinyl-Leu-Tyr-|-NHMec, and Leu-Tyr-Leu-|-Tyr-Trp, in which cleavage of the -Tyr-|-Leu- and -Tyr-|-Trp bonds also occurs).. Cleaves peptides in various proteins in a process that requires ATP hydrolysis. Has a chymotrypsin-like activity. Plays a major role in the degradation of misfolded proteins. This is ATP-dependent Clp protease proteolytic subunit from Syntrophotalea carbinolica (strain DSM 2380 / NBRC 103641 / GraBd1) (Pelobacter carbinolicus).